The primary structure comprises 353 residues: MKLSDFDFDLPLELIAQNPISKRDESNLLIASTQQYVKTKFYNIIDYLKEGDLLVFNNSKVIKAKLSLDKNITINLNQRLKDNRRATNDDAGRLKSIDYWSAFAKPARKLKVGDEFYFDNHKIIITEKLEMGEIKIKFELANISVFEFLDKYGEMPLPLYIKRPERQKSDDERYQTVYSNIQGSVAAPTAGLHFTNDIINKLKAKGVQVAFVTLHVGAGTFMPVKTENINEHKMHTEYCSITPETAAIINKAKKEKRRIIAVGTTSLRTLESSGINGNVNSGDFETDIFITPGFKFQIVDMLLTNFHFPKSTLFMLVCAFAGFKKMHELYKYAIEEQMRFFSYGDATLLYRKV.

It belongs to the QueA family. As to quaternary structure, monomer.

The protein localises to the cytoplasm. The catalysed reaction is 7-aminomethyl-7-carbaguanosine(34) in tRNA + S-adenosyl-L-methionine = epoxyqueuosine(34) in tRNA + adenine + L-methionine + 2 H(+). It participates in tRNA modification; tRNA-queuosine biosynthesis. In terms of biological role, transfers and isomerizes the ribose moiety from AdoMet to the 7-aminomethyl group of 7-deazaguanine (preQ1-tRNA) to give epoxyqueuosine (oQ-tRNA). In Rickettsia bellii (strain RML369-C), this protein is S-adenosylmethionine:tRNA ribosyltransferase-isomerase.